The chain runs to 265 residues: Hydroxyethylthiazole kinase (265 aa).

Residue M55 coordinates substrate. Residues R130 and S176 each coordinate ATP. G203 is a substrate binding site.

Belongs to the Thz kinase family. It depends on Mg(2+) as a cofactor.

The enzyme catalyses 5-(2-hydroxyethyl)-4-methylthiazole + ATP = 4-methyl-5-(2-phosphooxyethyl)-thiazole + ADP + H(+). It functions in the pathway cofactor biosynthesis; thiamine diphosphate biosynthesis; 4-methyl-5-(2-phosphoethyl)-thiazole from 5-(2-hydroxyethyl)-4-methylthiazole: step 1/1. Its function is as follows. Catalyzes the phosphorylation of the hydroxyl group of 4-methyl-5-beta-hydroxyethylthiazole (THZ). The chain is Hydroxyethylthiazole kinase from Leptospira interrogans serogroup Icterohaemorrhagiae serovar copenhageni (strain Fiocruz L1-130).